The primary structure comprises 692 residues: Transcription factor steA (692 aa).

A DNA-binding region spans residues 56–165 (DQLIRRFLLP…SVPHDRLFLD (110 aa)). Disordered regions lie at residues 406-507 (SPTY…EQSS) and 519-540 (LPANGTVESGAPNGVGHKSDRY). The span at 470–482 (RSVNSTYTATLPQ) shows a compositional bias: polar residues. 2 C2H2-type zinc fingers span residues 564-588 (HSCPIPSCGRLFKRLEHLKRHVRTH) and 594-616 (YPCPYCNKAFSRSDNLAQHRRIH). The interval 618–665 (AQQDGQPLVHEDDLENDDNESVSHDEDESPSESVHPAVPGVHGMTSMP) is disordered. The span at 629-647 (DDLENDDNESVSHDEDESP) shows a compositional bias: acidic residues.

Belongs to the STE12 transcription factor family.

It localises to the nucleus. In terms of biological role, transcription factor involved in sexual reproduction. Required for cleistothecial development and ascosporogenesis. Not required for asexual reproduction (conidiation). May act to repress medA expression. The polypeptide is Transcription factor steA (steA) (Emericella nidulans (strain FGSC A4 / ATCC 38163 / CBS 112.46 / NRRL 194 / M139) (Aspergillus nidulans)).